Consider the following 313-residue polypeptide: ADP-L-glycero-D-manno-heptose-6-epimerase (313 aa).

NADP(+) contacts are provided by residues 10–11 (MI), 31–32 (DN), K38, K53, 75–79 (EGACS), and N92. The Proton acceptor role is filled by Y139. K143 serves as a coordination point for NADP(+). N174 serves as a coordination point for substrate. Positions 175 and 183 each coordinate NADP(+). The Proton acceptor role is filled by K183. Substrate contacts are provided by residues S185, H192, 206–209 (FEGS), R214, and Y277.

Belongs to the NAD(P)-dependent epimerase/dehydratase family. HldD subfamily. As to quaternary structure, homopentamer. Requires NADP(+) as cofactor.

The catalysed reaction is ADP-D-glycero-beta-D-manno-heptose = ADP-L-glycero-beta-D-manno-heptose. It functions in the pathway nucleotide-sugar biosynthesis; ADP-L-glycero-beta-D-manno-heptose biosynthesis; ADP-L-glycero-beta-D-manno-heptose from D-glycero-beta-D-manno-heptose 7-phosphate: step 4/4. Catalyzes the interconversion between ADP-D-glycero-beta-D-manno-heptose and ADP-L-glycero-beta-D-manno-heptose via an epimerization at carbon 6 of the heptose. In Aliivibrio fischeri (strain ATCC 700601 / ES114) (Vibrio fischeri), this protein is ADP-L-glycero-D-manno-heptose-6-epimerase.